A 215-amino-acid polypeptide reads, in one-letter code: Cytochrome b-c1 complex subunit Rieske, mitochondrial (215 aa).

The transit peptide at 1–22 directs the protein to the mitochondrion; it reads MLGIRSSVKTCFKPMSLTSKRL. The propeptide at 23–30 is removed in mature form; the sequence is ISQSLLAS. The Mitochondrial matrix portion of the chain corresponds to 31 to 50; that stretch reads KSTYRTPNFDDVLKENNDAD. The helical transmembrane segment at 51–80 threads the bilayer; that stretch reads KGRSYAYFMVGAMGLLSSAGAKSTVETFIS. Over 81–215 the chain is Mitochondrial intermembrane; it reads SMTATADVLA…EFDGDKVIVG (135 aa). A hinge region spans residues 90-93; it reads AMAK. The Rieske domain occupies 123 to 214; that stretch reads PHEIQEANSV…YEFDGDKVIV (92 aa). [2Fe-2S] cluster-binding residues include cysteine 159, histidine 161, cysteine 178, and histidine 181. An intrachain disulfide couples cysteine 164 to cysteine 180.

It belongs to the Rieske iron-sulfur protein family. Component of the ubiquinol-cytochrome c oxidoreductase (cytochrome b-c1 complex, complex III, CIII), a multisubunit enzyme composed of 10 subunits. The complex is composed of 3 respiratory subunits cytochrome b (COB), cytochrome c1 (CYT1) and Rieske protein (RIP1), 2 core protein subunits COR1 and QCR2, and 5 low-molecular weight protein subunits QCR6, QCR7, QCR8, QCR9 and QCR10. The complex exists as an obligatory dimer and forms supercomplexes (SCs) in the inner mitochondrial membrane with a monomer or a dimer of cytochrome c oxidase (complex IV, CIV), resulting in 2 different assemblies (supercomplexes III(2)IV and III(2)IV(2)). RIP1 interacts with QCR10 on the intermembrane space (IMS) side, and with QCR9. It depends on [2Fe-2S] cluster as a cofactor. Processed by both the mitochondrial processing peptidase (MPP) and the mitochondrial intermediate protease (MIP). Initially, MPP removes 22 amino acids from the newly imported precursor in the mitochondrial matrix. This proteolytic processing is then followed by a second proteolytic cleavage by MIP, which removes an octapeptide to generate mature-sized RIP1.

It localises to the mitochondrion inner membrane. It carries out the reaction a quinol + 2 Fe(III)-[cytochrome c](out) = a quinone + 2 Fe(II)-[cytochrome c](out) + 2 H(+)(out). Component of the ubiquinol-cytochrome c oxidoreductase, a multisubunit transmembrane complex that is part of the mitochondrial electron transport chain which drives oxidative phosphorylation. The respiratory chain contains 3 multisubunit complexes succinate dehydrogenase (complex II, CII), ubiquinol-cytochrome c oxidoreductase (cytochrome b-c1 complex, complex III, CIII) and cytochrome c oxidase (complex IV, CIV), that cooperate to transfer electrons derived from NADH and succinate to molecular oxygen, creating an electrochemical gradient over the inner membrane that drives transmembrane transport and the ATP synthase. The cytochrome b-c1 complex catalyzes electron transfer from ubiquinol to cytochrome c, linking this redox reaction to translocation of protons across the mitochondrial inner membrane, with protons being carried across the membrane as hydrogens on the quinol. In the process called Q cycle, 2 protons are consumed from the matrix, 4 protons are released into the intermembrane space and 2 electrons are passed to cytochrome c. The Rieske protein is a catalytic core subunit containing a [2Fe-2S] iron-sulfur cluster. It cycles between 2 conformational states during catalysis to transfer electrons from the quinol bound in the Q(0) site in cytochrome b (COB) to cytochrome c1 (CYT1). This chain is Cytochrome b-c1 complex subunit Rieske, mitochondrial (RIP1), found in Saccharomyces cerevisiae (strain ATCC 204508 / S288c) (Baker's yeast).